The sequence spans 328 residues: Nuclear transcription factor Y subunit A-8 (328 aa).

Residues Lys-54–Arg-86 are disordered. The segment covering Ser-57–Asp-75 has biased composition (low complexity). The segment covering Val-76–Arg-86 has biased composition (polar residues). A Subunit association domain (SAD) motif is present at residues Phe-175–Asn-198. A DNA-binding region (NFYA/HAP2-type) is located at residues Lys-205 to Thr-230.

Belongs to the NFYA/HAP2 subunit family. As to quaternary structure, heterotrimeric transcription factor composed of three components, NF-YA, NF-YB and NF-YC. NF-YB and NF-YC must interact and dimerize for NF-YA association and DNA binding. As to expression, expressed in the whole plant, except roots.

It localises to the nucleus. Stimulates the transcription of various genes by recognizing and binding to a CCAAT motif in promoters. The sequence is that of Nuclear transcription factor Y subunit A-8 (NFYA8) from Arabidopsis thaliana (Mouse-ear cress).